The following is a 730-amino-acid chain: MAAGVEAAAEVAATEIKMEEESGAPGVPSGNGAPGPKGEGERPAQNEKRKEKNIKRGGNRFEPYANPTKRYRAFITNIPFDVKWQSLKDLVKEKVGEVTYVELLMDAEGKSRGCAVVEFKMEESMKKAAEVLNKHSLSGRPLKVKEDPDGEHARRAMQKVMATTGGMGMGPGGPGMITIPPSILNNPNIPNEIIHALQAGRLGSTVFVANLDYKVGWKKLKEVFSMAGVVVRADILEDKDGKSRGIGTVTFEQSIEAVQAISMFNGQLLFDRPMHVKMDERALPKGDFFPPERPQQLPHGLGGIGMGLGPGGQPIDANHLNKGIGMGNIGPAGMGMEGIGFGINKMGGMEGPFGGGMENMGRFGSGMNMGRINEILSNALKRGEIIAKQGGGGGGGSVPGIERMGPGIDRLGGAGMERMGAGLGHGMDRVGSEIERMGLVMDRMGSVERMGSGIERMGPLGLDHMASSIERMGQTMERIGSGVERMGAGMGFGLERMAAPIDRVGQTIERMGSGVERMGPAIERMGLSMERMVPAGMGAGLERMGPVMDRMATGLERMGANNLERMGLERMGANSLERMGLERMGANSLERMGPAMGPALGAGIERMGLAMGGGGGASFDRAIEMERGNFGGSFAGSFGGAGGHAPGVARKACQIFVRNLPFDFTWKMLKDKFNECGHVLYADIKMENGKSKGCGVVKFESPEVAERACRMMNGMKLSGREIDVRIDRNA.

Residues 1–13 (MAAGVEAAAEVAA) show a composition bias toward low complexity. The segment at 1–62 (MAAGVEAAAE…NIKRGGNRFE (62 aa)) is disordered. An N-acetylalanine modification is found at Ala-2. A Glycyl lysine isopeptide (Lys-Gly) (interchain with G-Cter in SUMO2) cross-link involves residue Lys-17. A Phosphoserine modification is found at Ser-29. Lys-37 is covalently cross-linked (Glycyl lysine isopeptide (Lys-Gly) (interchain with G-Cter in SUMO2)). Residues 38–50 (GEGERPAQNEKRK) are compositionally biased toward basic and acidic residues. Glycyl lysine isopeptide (Lys-Gly) (interchain with G-Cter in SUMO2) cross-links involve residues Lys-69 and Lys-83. RRM domains are found at residues 71 to 149 (YRAF…EDPD) and 204 to 281 (STVF…MDER). Position 86 is a phosphoserine (Ser-86). Glycyl lysine isopeptide (Lys-Gly) (interchain with G-Cter in SUMO2) cross-links involve residues Lys-88 and Lys-127. N6-acetyllysine; alternate is present on Lys-134. A Glycyl lysine isopeptide (Lys-Gly) (interchain with G-Cter in SUMO2); alternate cross-link involves residue Lys-134. Glycyl lysine isopeptide (Lys-Gly) (interchain with G-Cter in SUMO2) cross-links involve residues Lys-143 and Lys-145. Position 204 is a phosphoserine (Ser-204). Lys-221 participates in a covalent cross-link: Glycyl lysine isopeptide (Lys-Gly) (interchain with G-Cter in SUMO2). N6-acetyllysine; alternate is present on Lys-277. A Glycyl lysine isopeptide (Lys-Gly) (interchain with G-Cter in SUMO2); alternate cross-link involves residue Lys-277. Residues Lys-285 and Lys-345 each participate in a glycyl lysine isopeptide (Lys-Gly) (interchain with G-Cter in SUMO2) cross-link. Phosphoserine is present on residues Ser-365 and Ser-377. Glycyl lysine isopeptide (Lys-Gly) (interchain with G-Cter in SUMO2) cross-links involve residues Lys-381 and Lys-388. Ser-397 bears the Phosphoserine mark. Repeat copies occupy residues 400–405 (GIERMG), 407–412 (GIDRLG), 415–420 (GMERMG), and 426–431 (GMDRVG). Residues 400–608 (GIERMGPGID…ALGAGIERMG (209 aa)) are 27 X 6 AA repeats of [GEVSTPAN]-[ILMV]-[DE]-[RH]-[MLVI]-[GAV]. Position 432 is a phosphoserine (Ser-432). 3 repeat units span residues 433-438 (EIERMG), 440-445 (VMDRMG), and 446-451 (SVERMG). Ser-452 carries the phosphoserine modification. 4 repeat units span residues 453–458 (GIERMG), 461–466 (GLDHMA), 468–473 (SIERMG), and 475–480 (TMERIG). The residue at position 468 (Ser-468) is a Phosphoserine. Residue Ser-481 is modified to Phosphoserine. Tandem repeats lie at residues 482-487 (GVERMG), 493-498 (GLERMA), 500-505 (PIDRVG), 507-512 (TIERMG), 514-519 (GVERMG), 521-526 (AIERMG), 528-533 (SMERMV), 540-545 (GLERMG), 547-552 (VMDRMA), 554-559 (GLERMG), 562-566 (NLERM), 567-572 (GLERMG), 575-579 (SLERM), 580-585 (GLERMG), 588-593 (SLERMG), and 603-608 (GIERMG). The residue at position 496 (Arg-496) is an Omega-N-methylarginine. A Phosphoserine modification is found at Ser-528. Ser-575 carries the post-translational modification Phosphoserine. Phosphoserine is present on Ser-588. A phosphoserine mark is found at Ser-618, Ser-633, and Ser-637. Lys-651 participates in a covalent cross-link: Glycyl lysine isopeptide (Lys-Gly) (interchain with G-Cter in SUMO2). The 77-residue stretch at 653-729 (CQIFVRNLPF…REIDVRIDRN (77 aa)) folds into the RRM 3 domain. Thr-665 is modified (phosphothreonine). Lys-667 participates in a covalent cross-link: Glycyl lysine isopeptide (Lys-Gly) (interchain with G-Cter in SUMO2). N6-acetyllysine is present on Lys-672. Glycyl lysine isopeptide (Lys-Gly) (interchain with G-Cter in SUMO2) cross-links involve residues Lys-685 and Lys-692. Lys-698 carries the N6-acetyllysine; alternate modification. Lys-698 participates in a covalent cross-link: Glycyl lysine isopeptide (Lys-Gly) (interchain with G-Cter in SUMO2); alternate. Lys-698 is covalently cross-linked (Glycyl lysine isopeptide (Lys-Gly) (interchain with G-Cter in SUMO1); alternate). Ser-701 is subject to Phosphoserine. A Glycyl lysine isopeptide (Lys-Gly) (interchain with G-Cter in SUMO2) cross-link involves residue Lys-716.

Identified in the spliceosome C complex. Interacts with PPIA/CYPA. In terms of processing, sumoylated.

It localises to the nucleus. It is found in the nucleolus. In terms of biological role, pre-mRNA binding protein in vivo, binds avidly to poly(G) and poly(U) RNA homopolymers in vitro. Involved in splicing. Acts as a receptor for carcinoembryonic antigen in Kupffer cells, may initiate a series of signaling events leading to tyrosine phosphorylation of proteins and induction of IL-1 alpha, IL-6, IL-10 and tumor necrosis factor alpha cytokines. The protein is Heterogeneous nuclear ribonucleoprotein M (HNRNPM) of Homo sapiens (Human).